We begin with the raw amino-acid sequence, 249 residues long: 1-(5-phosphoribosyl)-5-[(5-phosphoribosylamino)methylideneamino] imidazole-4-carboxamide isomerase (249 aa).

The active-site Proton acceptor is the D8. The Proton donor role is filled by D131.

It belongs to the HisA/HisF family.

The protein localises to the cytoplasm. The enzyme catalyses 1-(5-phospho-beta-D-ribosyl)-5-[(5-phospho-beta-D-ribosylamino)methylideneamino]imidazole-4-carboxamide = 5-[(5-phospho-1-deoxy-D-ribulos-1-ylimino)methylamino]-1-(5-phospho-beta-D-ribosyl)imidazole-4-carboxamide. It functions in the pathway amino-acid biosynthesis; L-histidine biosynthesis; L-histidine from 5-phospho-alpha-D-ribose 1-diphosphate: step 4/9. The sequence is that of 1-(5-phosphoribosyl)-5-[(5-phosphoribosylamino)methylideneamino] imidazole-4-carboxamide isomerase from Aromatoleum aromaticum (strain DSM 19018 / LMG 30748 / EbN1) (Azoarcus sp. (strain EbN1)).